Consider the following 238-residue polypeptide: Ribonuclease PH (238 aa).

Phosphate-binding positions include Arg-86 and Gly-124–Arg-126.

It belongs to the RNase PH family. As to quaternary structure, homohexameric ring arranged as a trimer of dimers.

It carries out the reaction tRNA(n+1) + phosphate = tRNA(n) + a ribonucleoside 5'-diphosphate. Functionally, phosphorolytic 3'-5' exoribonuclease that plays an important role in tRNA 3'-end maturation. Removes nucleotide residues following the 3'-CCA terminus of tRNAs; can also add nucleotides to the ends of RNA molecules by using nucleoside diphosphates as substrates, but this may not be physiologically important. Probably plays a role in initiation of 16S rRNA degradation (leading to ribosome degradation) during starvation. This is Ribonuclease PH from Hahella chejuensis (strain KCTC 2396).